The following is a 107-amino-acid chain: Ubiquitin-related modifier 1 (107 aa).

At Gly-107 the chain carries 1-thioglycine. Gly-107 is covalently cross-linked (Glycyl lysine isopeptide (Gly-Lys) (interchain with K-? in acceptor proteins)).

Belongs to the URM1 family. In terms of processing, C-terminal thiocarboxylation occurs in 2 steps, it is first acyl-adenylated (-COAMP) via the hesA/moeB/thiF part of UBA4, then thiocarboxylated (-COSH) via the rhodanese domain of UBA4.

The protein resides in the cytoplasm. The protein operates within tRNA modification; 5-methoxycarbonylmethyl-2-thiouridine-tRNA biosynthesis. In terms of biological role, acts as a sulfur carrier required for 2-thiolation of mcm(5)S(2)U at tRNA wobble positions of cytosolic tRNA(Lys), tRNA(Glu) and tRNA(Gln). Serves as sulfur donor in tRNA 2-thiolation reaction by being thiocarboxylated (-COSH) at its C-terminus by the MOCS3 homolog UBA4. The sulfur is then transferred to tRNA to form 2-thiolation of mcm(5)S(2)U. Prior mcm(5) tRNA modification by the elongator complex is required for 2-thiolation. Also acts as a ubiquitin-like protein (UBL) that is covalently conjugated via an isopeptide bond to lysine residues of target proteins such as AHP1. The thiocarboxylated form serves as substrate for conjugation and oxidative stress specifically induces the formation of UBL-protein conjugates. The polypeptide is Ubiquitin-related modifier 1 (Mycosarcoma maydis (Corn smut fungus)).